A 483-amino-acid polypeptide reads, in one-letter code: MLTLDTLNVMLAVSEEGLIEEMIIALLASPQLAVFFEKFPRLKAAITDDVPRWREALRSRLKDARVPPELTEEVMCYQQSQLLSTPQFIVQLPQILDLLHRLNSPWAEQARQLVDANSTITSALHTLFLQRWRLSLIVQATTLNQQLLEEEREQLLSEVQERMTLSGQLEPILADNNTAAGRLWDMSAGQLKRGDYQLIVKYGEFLNEQPELKRLAEQLGRSREAKSIPRNDAQMETFRTLVREPATVPEQVDGLQQSDDILRLLPPELATLGITELEYEFYRRLVEKQLLTYRLHGESWREKVIERPVVHKDYDEQPRGPFIVCVDTSGSMGGFNEQCAKAFCLALMRIALAENRRCYIMLFSTEIVRYELSGPQGIEQAIRFLSQQFRGGTDLASCFRAIMERLQSREWFDADAVVISDFIAQRLPDDVTSKVKELQRVHQHRFHAVAMSAHGKPGIMRIFDHIWRFDTGMRSRLLRRWRR.

The protein belongs to the ViaA family. As to quaternary structure, homodimer. Interacts with RavA.

It localises to the cytoplasm. Functionally, component of the RavA-ViaA chaperone complex, which may act on the membrane to optimize the function of some of the respiratory chains. ViaA stimulates the ATPase activity of RavA. The polypeptide is Regulatory protein ViaA (Escherichia coli O17:K52:H18 (strain UMN026 / ExPEC)).